The chain runs to 150 residues: Peptide deformylase (150 aa).

2 residues coordinate Fe cation: cysteine 88 and histidine 130. Glutamate 131 is an active-site residue. Residue histidine 134 coordinates Fe cation.

This sequence belongs to the polypeptide deformylase family. It depends on Fe(2+) as a cofactor.

The enzyme catalyses N-terminal N-formyl-L-methionyl-[peptide] + H2O = N-terminal L-methionyl-[peptide] + formate. Removes the formyl group from the N-terminal Met of newly synthesized proteins. Requires at least a dipeptide for an efficient rate of reaction. N-terminal L-methionine is a prerequisite for activity but the enzyme has broad specificity at other positions. The sequence is that of Peptide deformylase from Desulfitobacterium hafniense (strain Y51).